The primary structure comprises 553 residues: Sulfatase (553 aa).

The N-terminal stretch at Met1 to Ser25 is a signal peptide. Ca(2+) is bound by residues Asp43, Asp44, and Cys88. The Nucleophile role is filled by Cys88. Cys88 bears the 3-oxoalanine (Cys) mark. Residue His159 is part of the active site. Residues Asp350 and Asn351 each contribute to the Ca(2+) site.

The protein belongs to the sulfatase family. The cofactor is Ca(2+). The conversion to 3-oxoalanine (also known as C-formylglycine, FGly), of a serine or cysteine residue in prokaryotes and of a cysteine residue in eukaryotes, is critical for catalytic activity. This post-translational modification is severely defective in multiple sulfatase deficiency (MSD).

Its subcellular location is the secreted. Functionally, sulfatase that may be involved in ulvan degradation. Ulvan is the main polysaccharide component of the Ulvales (green seaweed) cell wall. It is composed of disaccharide building blocks comprising 3-sulfated rhamnose (Rha3S) linked to D-glucuronic acid (GlcA), L-iduronic acid (IduA), or D-xylose (Xyl). The chain is Sulfatase from Formosa agariphila (strain DSM 15362 / KCTC 12365 / LMG 23005 / KMM 3901 / M-2Alg 35-1).